The chain runs to 520 residues: MHQKILILDFGSQYTQLIARRVREAGVYCELHPNDVSEDFVREFAPQGIILSGGPNSVYEDETPRAPDVVFTLGVPVLGICYGMQTMAAQLGGAVESAAKREFGYAEIRARGHTQLLRDIQDRVTGEGHGMLDVWMSHGDKVTALPEGFKLMASNAATPIAGMADEARRFYGVQFHPEVTHTLQGKHILNRFVHDICGCGSDWNMPDYVEEAIGKVRSEVGSDEVILGLSGGVDSSVVAALLHRAVGDQLTCVFVDNGLLRLNEAEQVMETFAQNLGVKVIHVDATERFMRELAGVSDPEQKRKIIGREFVHVFQEEAEKLPKAKWLAQGTIYPDVIESASAKTKKAHTIKSHHNVGGLPETLHLQLLEPLRELFKDEVRELGIALGLPHDMVYRHPFPGPGLGVRILGKVKREYADLLRRADAIFIEELRASGWYEKTSQAFTVFLPVKSVGVMGDGRTYDYVVALRAVQTQDFMTAHWAELPYTLLGKVSNRIINEVRGINRVVYDVSGKPPATIEWE.

Positions 4 to 202 (KILILDFGSQ…VHDICGCGSD (199 aa)) constitute a Glutamine amidotransferase type-1 domain. The Nucleophile role is filled by Cys81. Catalysis depends on residues His176 and Glu178. The GMPS ATP-PPase domain maps to 203–395 (WNMPDYVEEA…LGLPHDMVYR (193 aa)). Residue 230-236 (SGGVDSS) coordinates ATP.

Homodimer.

It carries out the reaction XMP + L-glutamine + ATP + H2O = GMP + L-glutamate + AMP + diphosphate + 2 H(+). Its pathway is purine metabolism; GMP biosynthesis; GMP from XMP (L-Gln route): step 1/1. In terms of biological role, catalyzes the synthesis of GMP from XMP. In Thiobacillus denitrificans (strain ATCC 25259 / T1), this protein is GMP synthase [glutamine-hydrolyzing].